Here is a 208-residue protein sequence, read N- to C-terminus: Uracil phosphoribosyltransferase (208 aa).

5-phospho-alpha-D-ribose 1-diphosphate-binding positions include Arg78, Arg103, and 130-138 (DPMLATGGS). Residues Ile193 and 198–200 (GDA) each bind uracil. Asp199 lines the 5-phospho-alpha-D-ribose 1-diphosphate pocket.

The protein belongs to the UPRTase family. Requires Mg(2+) as cofactor.

The catalysed reaction is UMP + diphosphate = 5-phospho-alpha-D-ribose 1-diphosphate + uracil. It participates in pyrimidine metabolism; UMP biosynthesis via salvage pathway; UMP from uracil: step 1/1. Its activity is regulated as follows. Allosterically activated by GTP. Catalyzes the conversion of uracil and 5-phospho-alpha-D-ribose 1-diphosphate (PRPP) to UMP and diphosphate. In Tolumonas auensis (strain DSM 9187 / NBRC 110442 / TA 4), this protein is Uracil phosphoribosyltransferase.